We begin with the raw amino-acid sequence, 532 residues long: MSEQVIIFDTTLRDGEQALQASLSVKEKLQIAFALERMGVDVMEVGFPVSSPGDFESVQTIARNIKNSRVCGLTRCVEKDIDVAAEALRVAEAFRIHTFIATSPMHIATKLRSTLDEVIERAIYMIKRARNYTDDVEFSCEDAGRTPIPDLCRVVEAAINAGARTINIPDTVGYTMPHEFGNIIASLYQHVPNIDKAIISVHTHDDLGLAVGNAMAAVHAGARQVEGTLNGIGERAGNCSLEEVIMAIKTRHDILNVHTNINHQEIYRTSQLVSQICNMPIPANKAVVGANAFAHSSGIHQDGVLKNRENYEIMTPESIGLKEVQLNLTSRSGRAAVKHRMEEMGYQDNDYNLDDLYSAFLKLADKKGQVFDYDLEALAFISRQQEEPEFYHLDYFSVQSGSSVMATASVKLICGEETQSEAATGNGPVDAVYQAINRITGYQVSLVKYQLTAKGQGRDALGQVDIVADYQGRRFHGVGLATDIVESSAQAMVNVLNNIKRAQQVEKEIQRLQQHNNQQQNDSKQQNSQETV.

Residues 5–267 (VIIFDTTLRD…HTNINHQEIY (263 aa)) enclose the Pyruvate carboxyltransferase domain. Mn(2+) contacts are provided by Asp-14, His-202, His-204, and Asn-238. Positions 392–532 (HLDYFSVQSG…SKQQNSQETV (141 aa)) are regulatory domain. The interval 513–532 (QQHNNQQQNDSKQQNSQETV) is disordered.

It belongs to the alpha-IPM synthase/homocitrate synthase family. LeuA type 1 subfamily. In terms of assembly, homodimer. The cofactor is Mn(2+).

The protein resides in the cytoplasm. The catalysed reaction is 3-methyl-2-oxobutanoate + acetyl-CoA + H2O = (2S)-2-isopropylmalate + CoA + H(+). It functions in the pathway amino-acid biosynthesis; L-leucine biosynthesis; L-leucine from 3-methyl-2-oxobutanoate: step 1/4. Its function is as follows. Catalyzes the condensation of the acetyl group of acetyl-CoA with 3-methyl-2-oxobutanoate (2-ketoisovalerate) to form 3-carboxy-3-hydroxy-4-methylpentanoate (2-isopropylmalate). This chain is 2-isopropylmalate synthase, found in Pectobacterium atrosepticum (strain SCRI 1043 / ATCC BAA-672) (Erwinia carotovora subsp. atroseptica).